A 236-amino-acid chain; its full sequence is Small ribosomal subunit protein uS2c (236 aa).

Belongs to the universal ribosomal protein uS2 family.

It is found in the plastid. Its subcellular location is the chloroplast. This is Small ribosomal subunit protein uS2c (rps2) from Illicium oligandrum (Star anise).